The sequence spans 161 residues: Lipoprotein signal peptidase (161 aa).

3 helical membrane passes run 9 to 29 (ISLL…WLIT), 63 to 83 (KMLF…IFYI), and 88 to 108 (FNLF…GNFI). Residues Asp118 and Asp136 contribute to the active site. The chain crosses the membrane as a helical span at residues 131–151 (IFNIADSSLTIGVIFVIIALI).

It belongs to the peptidase A8 family.

The protein localises to the cell membrane. The enzyme catalyses Release of signal peptides from bacterial membrane prolipoproteins. Hydrolyzes -Xaa-Yaa-Zaa-|-(S,diacylglyceryl)Cys-, in which Xaa is hydrophobic (preferably Leu), and Yaa (Ala or Ser) and Zaa (Gly or Ala) have small, neutral side chains.. The protein operates within protein modification; lipoprotein biosynthesis (signal peptide cleavage). This protein specifically catalyzes the removal of signal peptides from prolipoproteins. This chain is Lipoprotein signal peptidase, found in Staphylococcus epidermidis (strain ATCC 12228 / FDA PCI 1200).